The following is a 123-amino-acid chain: Fluoride-specific ion channel FluC (123 aa).

Transmembrane regions (helical) follow at residues 7 to 27, 39 to 59, 68 to 88, and 100 to 120; these read VAIA…SGIL, LVNS…FWGI, FFGT…YETF, and ALNI…GFIL. Residues G75 and S78 each coordinate Na(+).

This sequence belongs to the fluoride channel Fluc/FEX (TC 1.A.43) family.

Its subcellular location is the cell membrane. The enzyme catalyses fluoride(in) = fluoride(out). Its activity is regulated as follows. Na(+) is not transported, but it plays an essential structural role and its presence is essential for fluoride channel function. Functionally, fluoride-specific ion channel. Important for reducing fluoride concentration in the cell, thus reducing its toxicity. The protein is Fluoride-specific ion channel FluC of Thermococcus onnurineus (strain NA1).